Here is an 85-residue protein sequence, read N- to C-terminus: Putative regulatory protein THEYE_A0405 (85 aa).

Belongs to the RemA family.

The polypeptide is Putative regulatory protein THEYE_A0405 (Thermodesulfovibrio yellowstonii (strain ATCC 51303 / DSM 11347 / YP87)).